Here is a 169-residue protein sequence, read N- to C-terminus: NADH-quinone oxidoreductase subunit I (169 aa).

2 consecutive 4Fe-4S ferredoxin-type domains span residues 61-90 and 100-129; these read RKYKNGEERCIACKLCEAICPAQAITIEAQ and VRYDIDMTKCIYCGFCQEACPVDAIVEGPN. [4Fe-4S] cluster contacts are provided by Cys70, Cys73, Cys76, Cys80, Cys109, Cys112, Cys115, and Cys119.

Belongs to the complex I 23 kDa subunit family. NDH-1 is composed of 14 different subunits. Subunits NuoA, H, J, K, L, M, N constitute the membrane sector of the complex. [4Fe-4S] cluster serves as cofactor.

Its subcellular location is the cell inner membrane. The catalysed reaction is a quinone + NADH + 5 H(+)(in) = a quinol + NAD(+) + 4 H(+)(out). In terms of biological role, NDH-1 shuttles electrons from NADH, via FMN and iron-sulfur (Fe-S) centers, to quinones in the respiratory chain. The immediate electron acceptor for the enzyme in this species is believed to be ubiquinone. Couples the redox reaction to proton translocation (for every two electrons transferred, four hydrogen ions are translocated across the cytoplasmic membrane), and thus conserves the redox energy in a proton gradient. The chain is NADH-quinone oxidoreductase subunit I from Ehrlichia chaffeensis (strain ATCC CRL-10679 / Arkansas).